A 900-amino-acid polypeptide reads, in one-letter code: Sterol regulatory element-binding protein 1 (900 aa).

Residues 1 to 16 are compositionally biased toward low complexity; the sequence is MQSSIPSVSVSVASPA. 2 disordered regions span residues 1–49 and 206–263; these read MQSS…TKAS and TTCK…PKKT. Residues 1-440 are nuclear form of sre1; complements deletions of sre1 or scp1; that stretch reads MQSSIPSVSV…FALPPFLMSP (440 aa). The Cytoplasmic segment spans residues 1-442; sequence MQSSIPSVSV…LPPFLMSPFT (442 aa). A compositionally biased stretch (polar residues) spans 21 to 32; sequence TKASPDSKSPNS. The segment covering 35–49 has biased composition (low complexity); that stretch reads AIPSSSPLASSTKAS. Positions 260–332 constitute a bHLH domain; sequence PKKTAHNMIE…AKATEYIRHL (73 aa). Residues 443-463 form a helical membrane-spanning segment; it reads GTVLFNMLKIGVVLLGLFYLL. Residues 464–509 are Lumenal-facing; the sequence is HDNSLFKGFKGEKKSKVSTRSSMSPSSILFRKTVFEKYCLLDHSTS. The chain crosses the membrane as a helical span at residues 510 to 530; that stretch reads TISLFFGLLIFTLKSAYGYLT. Residues 531-900 are Cytoplasmic-facing; the sequence is HRLSALYTSS…QEDLGYVSSA (370 aa). 2 positions are modified to phosphoserine: Ser-898 and Ser-899.

As to quaternary structure, forms a tight complex with scp1, composed of 4 copies of scp1 and 4 copies of sre1, which protects sre1 precursor from degradation by the proteasome. In low oxygen or sterol conditions, undergoes proteolytic cleavage by rhomboid-type protease rbd2 and is released as soluble transcription factor from the membrane. In terms of processing, processed form is phosphorylated.

The protein localises to the endoplasmic reticulum membrane. The protein resides in the nucleus. In terms of biological role, precursor of the transcription factor form (Processed sterol regulatory element-binding protein 1), which is embedded in the endoplasmic reticulum membrane. Low oxygen or sterol conditions promote processing of this form, releasing the transcription factor form that translocates into the nucleus and activates transcription of genes required for adaptation to anaerobic growth. Functionally, transcriptional activator required for transcription of genes required for adaptation to anaerobic growth like those implicated in the nonrespiratory oxygen-consumptive biosynthetic pathways of sterol, heme, sphingolipid, and ubiquinone biosynthesis. May monitor oxygen levels through sterol synthesis steps which require oxygen. The polypeptide is Sterol regulatory element-binding protein 1 (Schizosaccharomyces pombe (strain 972 / ATCC 24843) (Fission yeast)).